We begin with the raw amino-acid sequence, 508 residues long: MLO-like protein 3 (508 aa).

Residues 1–21 (MTDKEESNHSSEVGAVRSLQE) lie on the Extracellular side of the membrane. Residues 22–42 (TPTWALATVCFFFIAVSICLE) form a helical membrane-spanning segment. The Cytoplasmic segment spans residues 43–68 (RLINLLSTRLKKNRKTSLLEAVEKLK). A helical membrane pass occupies residues 69-89 (SVLMVLGFMSLMLNVTEGEVS). Residues 90–153 (KICIPIKYAN…SEEGLTQLSY (64 aa)) are Extracellular-facing. Residues 154-174 (FFFVLACMHILCNLAILLLGM) traverse the membrane as a helical segment. Topologically, residues 175-275 (AKMRKWNSWE…IQRSLHEDFK (101 aa)) are cytoplasmic. A helical transmembrane segment spans residues 276–296 (TVVGISPLMWLTVVIFMLLDV). The Extracellular portion of the chain corresponds to 297–304 (SGWRVYFY). A helical membrane pass occupies residues 305–325 (MSFVPLIIVLVIGTKLEMIVA). Over 326 to 357 (KMAVTIKENNSVIRGTPLVESNDTHFWFSNPR) the chain is Cytoplasmic. Residues 358 to 378 (FLLSILHYTLFLNTFEMAFIV) form a helical membrane-spanning segment. The Extracellular segment spans residues 379 to 401 (WITWQFGINSCYHDNQGIIITRL). A helical transmembrane segment spans residues 402-422 (VLAVTVQFLSSYITLPLYAIV). Residues 423–508 (TQMGSSYKRA…EIQIQEKTER (86 aa)) lie on the Cytoplasmic side of the membrane. A calmodulin-binding region spans residues 436 to 457 (EQLANVLRHWQGMVRDKKKTIQ). The segment at 453-492 (KKTIQTPDTDNNSNNNNGDIDSGESPVQTEVASEFRFSGR) is disordered. Ser494 carries the phosphoserine modification.

It belongs to the MLO family.

It localises to the membrane. In terms of biological role, may be involved in modulation of pathogen defense and leaf cell death. Activity seems to be regulated by Ca(2+)-dependent calmodulin binding and seems not to require heterotrimeric G proteins. The polypeptide is MLO-like protein 3 (MLO3) (Arabidopsis thaliana (Mouse-ear cress)).